A 252-amino-acid polypeptide reads, in one-letter code: Chaplin-A (252 aa).

Positions 1–20 are cleaved as a signal peptide; the sequence is MVAAAAATGILSLCGSPALA. Residues 31–71 form the Chaplin 1 domain; sequence SPGAVSGNALQVPVDVPVNACGNTVDVIAALNPAFGNECEN. Disordered stretches follow at residues 71–121 and 150–224; these read NASD…GNNA and CEND…GSEG. A compositionally biased stretch (low complexity) spans 86 to 108; that stretch reads EDASSSSSSSTSASSSGSHADGA. The region spanning 112 to 152 is the Chaplin 2 domain; the sequence is SPGVGSGNNAQVPVDVPVNLCGNTVDVIAALNPVFGNKCEN. Positions 153 to 165 are enriched in acidic residues; sequence DAEEPPGYGEEEP. Over residues 210–224 the composition is skewed to low complexity; the sequence is QTEQPPALAETGSEG. The LPXTG sorting signal motif lies at 217–221; the sequence is LAETG. 2 consecutive propeptides (removed by sortase) follow at residues 219 to 252 and 221 to 252; these read ETGS…LSGR and GSEG…LSGR. Thr-220 is modified (pentaglycyl murein peptidoglycan amidated threonine).

The protein belongs to the chaplin family. Long chaplin subfamily.

The protein localises to the secreted. Its subcellular location is the cell wall. Its function is as follows. One of 8 partially redundant surface-active proteins required for efficient formation of aerial mycelium; the short chaplins assemble into a hydrophobic, amyloidal fibrillar surface layer that envelopes and protects aerial hyphae and spores, presumably anchored to the long chaplins. Chaplins have an overlapping function with the surface-active SapB peptide; chaplins are essential on minimal medium while on rich medium both chaplins and SapB are required for efficient aerial hyphae formation. A minimal chaplin strain capable of forming aerial mycelium/hyphae on minimal medium contains ChpC, ChpE and ChpH. The strain also has restored rodlet formation on the hyphae surface. A second minimal chaplin strain with ChpA, ChpD and ChpE makes slightly less robust hyphae. The long chaplins (ChpA, ChpB, ChpC) are not absolutely necessary for short chaplin localization or rodlet formation, but probably play a role in initiating aerial hyphae development. Chaplins are also involved in cell attachment to a hydrophobic surface. This chain is Chaplin-A, found in Streptomyces coelicolor (strain ATCC BAA-471 / A3(2) / M145).